The following is a 209-amino-acid chain: Large ribosomal subunit protein uL3 (209 aa).

Residues Thr-133–Gly-153 form a disordered region. Residue Gln-150 is modified to N5-methylglutamine.

Belongs to the universal ribosomal protein uL3 family. Part of the 50S ribosomal subunit. Forms a cluster with proteins L14 and L19. Post-translationally, methylated by PrmB.

In terms of biological role, one of the primary rRNA binding proteins, it binds directly near the 3'-end of the 23S rRNA, where it nucleates assembly of the 50S subunit. This is Large ribosomal subunit protein uL3 from Serratia proteamaculans (strain 568).